Consider the following 374-residue polypeptide: Biotin synthase (374 aa).

The Radical SAM core domain maps to 51–278 (NTVKVNYLVN…DTEIRIAGGR (228 aa)). [4Fe-4S] cluster is bound by residues cysteine 66, cysteine 70, and cysteine 73. Residues cysteine 110, cysteine 143, cysteine 203, and arginine 273 each coordinate [2Fe-2S] cluster. The interval 346 to 374 (IAGGTSVAGSAPDPAIRRRGAGTDVPANA) is disordered.

It belongs to the radical SAM superfamily. Biotin synthase family. In terms of assembly, homodimer. Requires [4Fe-4S] cluster as cofactor. [2Fe-2S] cluster serves as cofactor.

The catalysed reaction is (4R,5S)-dethiobiotin + (sulfur carrier)-SH + 2 reduced [2Fe-2S]-[ferredoxin] + 2 S-adenosyl-L-methionine = (sulfur carrier)-H + biotin + 2 5'-deoxyadenosine + 2 L-methionine + 2 oxidized [2Fe-2S]-[ferredoxin]. It functions in the pathway cofactor biosynthesis; biotin biosynthesis; biotin from 7,8-diaminononanoate: step 2/2. Functionally, catalyzes the conversion of dethiobiotin (DTB) to biotin by the insertion of a sulfur atom into dethiobiotin via a radical-based mechanism. This chain is Biotin synthase, found in Nocardioides sp. (strain ATCC BAA-499 / JS614).